The chain runs to 336 residues: Ribose-phosphate pyrophosphokinase 1 (336 aa).

Mg(2+) contacts are provided by D150, H152, D161, and D165. The segment at 236-251 (GKVAVMVDDMIDTAGT) is binding of phosphoribosylpyrophosphate.

It belongs to the ribose-phosphate pyrophosphokinase family.

The enzyme catalyses D-ribose 5-phosphate + ATP = 5-phospho-alpha-D-ribose 1-diphosphate + AMP + H(+). In Spinacia oleracea (Spinach), this protein is Ribose-phosphate pyrophosphokinase 1 (PRS1).